Reading from the N-terminus, the 80-residue chain is Putative ATP-dependent Clp protease proteolytic subunit (80 aa).

Histidine 19 is an active-site residue.

This sequence belongs to the peptidase S14 family. Component of the chloroplastic Clp protease core complex.

It localises to the plastid. The protein resides in the chloroplast. It carries out the reaction Hydrolysis of proteins to small peptides in the presence of ATP and magnesium. alpha-casein is the usual test substrate. In the absence of ATP, only oligopeptides shorter than five residues are hydrolyzed (such as succinyl-Leu-Tyr-|-NHMec, and Leu-Tyr-Leu-|-Tyr-Trp, in which cleavage of the -Tyr-|-Leu- and -Tyr-|-Trp bonds also occurs).. Cleaves peptides in various proteins in a process that requires ATP hydrolysis. Has a chymotrypsin-like activity. Plays a major role in the degradation of misfolded proteins. This Pinus strobus (Eastern white pine) protein is Putative ATP-dependent Clp protease proteolytic subunit.